Consider the following 734-residue polypeptide: MELRFPRFSQGLAQDPTTRRIWFGIATAHDFESHDDITEERLYQNIFASHFGQLAIIFLWTSGNLFHVAWQGNFESWIQDPLHVRPIAHAIWDPHFGQPAVEAFTRGGAAGPVNIAYSGVYQWWYTIGLRTNEDLYTGALFLLFLSTLSLIAGWLHLQPKWKPSLSWFKNAESRLNHHLSGLFGVSSLAWTGHLVHVAIPASRGEYVRWNNFLDVLPYPQGLGPLLTGQWNLYAQNPDSSNHLFGTAQGAGTAILTLLGGFHPQTQSLWLTDMAHHHLAIAFIFLIAGHMYRTNFGIGHSIKDLLEAHTPPGGRLGRGHKGLYDTINNSIHFQLGLALASLGVITSLVAQHMYSLPPYAFIAQDFTTQAALYTHHQYIAGFIMTGAFAHGAIFFIRDYNPEQNEDNVLARMLDHKEAIISHLSWASLFLGFHTLGLYVHNDVMLAFGTPEKQILIEPIFAQWIQSAHGKTTYGFDILLSSTNGPAFNAGRSLWLPGWLNAVNENSNSLFLTIGPGDFLVHHAIALGLHTTTLILVKGALDARGSKLMPDKKDFGYSFPCDGPGRGGTCDISAWDAFYLAVFWMLNTIGWVTFYWHWKHITLWQGNVSQFNESSTYLMGWLRDYLWLNSSQLINGYNPFGMNSLSVWAWMFLFGHLVWATGFMFLISWRGYWQELIETLAWAHERTPLANLIRWRDKPVALSIVQARLVGLAHFSVGYIFTYAAFLIASTSGKFG.

Helical transmembrane passes span 46 to 69, 135 to 158, 175 to 199, 273 to 291, 330 to 353, 369 to 395, 417 to 439, and 517 to 535; these read IFAS…FHVA, LYTG…LHLQ, LNHH…HVAI, MAHH…GHMY, IHFQ…QHMY, AALY…IFFI, AIIS…LYVH, and FLVH…LILV. 2 residues coordinate [4Fe-4S] cluster: Cys559 and Cys568. A run of 2 helical transmembrane segments spans residues 575 to 596 and 643 to 665; these read AFYL…YWHW and LSVW…MFLI. Chlorophyll a is bound by residues His654, Met662, and Tyr670. Phylloquinone is bound at residue Trp671. A helical transmembrane segment spans residues 707–727; it reads LVGLAHFSVGYIFTYAAFLIA.

It belongs to the PsaA/PsaB family. As to quaternary structure, the PsaA/B heterodimer binds the P700 chlorophyll special pair and subsequent electron acceptors. PSI consists of a core antenna complex that captures photons, and an electron transfer chain that converts photonic excitation into a charge separation. The eukaryotic PSI reaction center is composed of at least 11 subunits. Requires P700 is a chlorophyll a/chlorophyll a' dimer, A0 is one or more chlorophyll a, A1 is one or both phylloquinones and FX is a shared 4Fe-4S iron-sulfur center. as cofactor.

The protein resides in the plastid. It is found in the chloroplast thylakoid membrane. The enzyme catalyses reduced [plastocyanin] + hnu + oxidized [2Fe-2S]-[ferredoxin] = oxidized [plastocyanin] + reduced [2Fe-2S]-[ferredoxin]. Its function is as follows. PsaA and PsaB bind P700, the primary electron donor of photosystem I (PSI), as well as the electron acceptors A0, A1 and FX. PSI is a plastocyanin-ferredoxin oxidoreductase, converting photonic excitation into a charge separation, which transfers an electron from the donor P700 chlorophyll pair to the spectroscopically characterized acceptors A0, A1, FX, FA and FB in turn. Oxidized P700 is reduced on the lumenal side of the thylakoid membrane by plastocyanin. The polypeptide is Photosystem I P700 chlorophyll a apoprotein A2 (Triticum aestivum (Wheat)).